The primary structure comprises 87 residues: Kappa-3-bungarotoxin (87 aa).

A signal peptide spans 1 to 21; that stretch reads MKTLLLSLVVVTIVCLDLGYT. 5 disulfides stabilise this stretch: Cys24–Cys42, Cys35–Cys63, Cys48–Cys52, Cys67–Cys79, and Cys80–Cys85.

This sequence belongs to the three-finger toxin family. Long-chain subfamily. Kappa-neurotoxin sub-subfamily. In terms of assembly, homodimer and heterodimer with kappa 2-bungarotoxin; non-covalently-linked. In terms of tissue distribution, expressed by the venom gland.

It localises to the secreted. Its function is as follows. Postsynaptic neurotoxin that binds and inhibits neuronal nicotinic acetylcholine receptors (nAChR) with high affinity (IC(50)&lt;100 nM). Is a selective, and slowly reversible antagonist of alpha-3/CHRNA3-containing and some alpha-4/CHRNA4-containing AChRs. This is Kappa-3-bungarotoxin from Bungarus multicinctus (Many-banded krait).